Reading from the N-terminus, the 72-residue chain is Penaeidin-2a (72 aa).

The signal sequence occupies residues 1 to 21 (MRLVVCLVFLASFALVCQGEA). 3 disulfide bridges follow: Cys45-Cys59, Cys48-Cys66, and Cys60-Cys67. Lys71 is subject to Lysine amide.

As to expression, higher expression in hemocytes and to a lesser extent in heart, testis, gills, intestine, lymphoid organ and hepatopancreas. Traces in eyes and subcuticular epithelium. Not present in the brain.

The protein localises to the cytoplasmic granule. In terms of biological role, antibacterial activity against M.luteus and E.coli bacteria. Antifungal activity against N.crassa and F.oxysporum. Presents chitin-binding activity. The sequence is that of Penaeidin-2a from Penaeus vannamei (Whiteleg shrimp).